Here is a 181-residue protein sequence, read N- to C-terminus: Photosystem I assembly protein Ycf4 (181 aa).

A run of 2 helical transmembrane segments spans residues 19 to 41 (YFWA…SSYF) and 61 to 83 (LVMS…TLFW).

It belongs to the Ycf4 family.

The protein resides in the plastid. Its subcellular location is the chloroplast thylakoid membrane. Seems to be required for the assembly of the photosystem I complex. In Trieres chinensis (Marine centric diatom), this protein is Photosystem I assembly protein Ycf4.